A 128-amino-acid chain; its full sequence is Sulfurtransferase TusD (128 aa).

Residue cysteine 78 is the Cysteine persulfide intermediate of the active site.

It belongs to the DsrE/TusD family. As to quaternary structure, heterohexamer, formed by a dimer of trimers. The hexameric TusBCD complex contains 2 copies each of TusB, TusC and TusD. The TusBCD complex interacts with TusE.

It is found in the cytoplasm. Its function is as follows. Part of a sulfur-relay system required for 2-thiolation of 5-methylaminomethyl-2-thiouridine (mnm(5)s(2)U) at tRNA wobble positions. Accepts sulfur from TusA and transfers it in turn to TusE. This chain is Sulfurtransferase TusD, found in Escherichia coli O139:H28 (strain E24377A / ETEC).